Consider the following 278-residue polypeptide: Phosphatidylglycerol--prolipoprotein diacylglyceryl transferase (278 aa).

4 consecutive transmembrane segments (helical) span residues 12-32, 44-64, 86-106, and 113-133; these read FGPL…LIGL, LENG…VIGA, IWEG…TLIL, and QPFL…QAIG. R134 serves as a coordination point for a 1,2-diacyl-sn-glycero-3-phospho-(1'-sn-glycerol). 3 consecutive transmembrane segments (helical) span residues 173 to 193, 203 to 223, and 246 to 266; these read PTFL…LVLF, FPAG…RIWI, and IAQL…WWLK.

The protein belongs to the Lgt family.

The protein localises to the cell inner membrane. It catalyses the reaction L-cysteinyl-[prolipoprotein] + a 1,2-diacyl-sn-glycero-3-phospho-(1'-sn-glycerol) = an S-1,2-diacyl-sn-glyceryl-L-cysteinyl-[prolipoprotein] + sn-glycerol 1-phosphate + H(+). It participates in protein modification; lipoprotein biosynthesis (diacylglyceryl transfer). Its function is as follows. Catalyzes the transfer of the diacylglyceryl group from phosphatidylglycerol to the sulfhydryl group of the N-terminal cysteine of a prolipoprotein, the first step in the formation of mature lipoproteins. The sequence is that of Phosphatidylglycerol--prolipoprotein diacylglyceryl transferase from Parasynechococcus marenigrum (strain WH8102).